Consider the following 143-residue polypeptide: Zinc-containing ferredoxin (143 aa).

Residues 13–60 are N-terminal extension; that stretch reads PIDEHFLENDKDYPVTGQHNGHDVRAEGMQRLDADGKPYPTKLGIHGT. Residues His31, His34, and His58 each coordinate Zn(2+). 4Fe-4S ferredoxin-type domains are found at residues 60-89 and 115-143; these read THVA…WNLN and KCDP…KITP. The [3Fe-4S] cluster site is built by Cys69 and Cys75. Cys79 contributes to the [4Fe-4S] cluster binding site. Asp117 contributes to the Zn(2+) binding site. Residues Cys124, Cys127, and Cys130 each contribute to the [4Fe-4S] cluster site. [3Fe-4S] cluster is bound at residue Cys134.

Requires [3Fe-4S] cluster as cofactor. [4Fe-4S] cluster serves as cofactor. The cofactor is Zn(2+).

Functionally, ferredoxins are iron-sulfur proteins that transfer electrons in a wide variety of metabolic reactions. The polypeptide is Zinc-containing ferredoxin (zfx) (Thermoplasma acidophilum (strain ATCC 25905 / DSM 1728 / JCM 9062 / NBRC 15155 / AMRC-C165)).